We begin with the raw amino-acid sequence, 207 residues long: Cytochrome c biogenesis ATP-binding export protein CcmA (207 aa).

The ABC transporter domain occupies 2–204 (LECENLSCTR…TTIDIRNFNR (203 aa)). 34 to 41 (GPNGSGKT) is a binding site for ATP.

This sequence belongs to the ABC transporter superfamily. CcmA exporter (TC 3.A.1.107) family. As to quaternary structure, the complex is composed of two ATP-binding proteins (CcmA) and two transmembrane proteins (CcmB).

The protein resides in the cell membrane. The enzyme catalyses heme b(in) + ATP + H2O = heme b(out) + ADP + phosphate + H(+). Part of the ABC transporter complex CcmAB involved in the biogenesis of c-type cytochromes; once thought to export heme, this seems not to be the case, but its exact role is uncertain. Responsible for energy coupling to the transport system. This Wolbachia pipientis wMel protein is Cytochrome c biogenesis ATP-binding export protein CcmA.